Reading from the N-terminus, the 284-residue chain is ATP phosphoribosyltransferase (284 aa).

The protein belongs to the ATP phosphoribosyltransferase family. Long subfamily. As to quaternary structure, equilibrium between an active dimeric form, an inactive hexameric form and higher aggregates. Interconversion between the various forms is largely reversible and is influenced by the natural substrates and inhibitors of the enzyme. Mg(2+) serves as cofactor.

It is found in the cytoplasm. The catalysed reaction is 1-(5-phospho-beta-D-ribosyl)-ATP + diphosphate = 5-phospho-alpha-D-ribose 1-diphosphate + ATP. It functions in the pathway amino-acid biosynthesis; L-histidine biosynthesis; L-histidine from 5-phospho-alpha-D-ribose 1-diphosphate: step 1/9. With respect to regulation, feedback inhibited by histidine. In terms of biological role, catalyzes the condensation of ATP and 5-phosphoribose 1-diphosphate to form N'-(5'-phosphoribosyl)-ATP (PR-ATP). Has a crucial role in the pathway because the rate of histidine biosynthesis seems to be controlled primarily by regulation of HisG enzymatic activity. This Mycobacterium avium (strain 104) protein is ATP phosphoribosyltransferase.